The sequence spans 246 residues: 1-(5-phosphoribosyl)-5-[(5-phosphoribosylamino)methylideneamino] imidazole-4-carboxamide isomerase (246 aa).

Catalysis depends on Asp10, which acts as the Proton acceptor.

This sequence belongs to the HisA/HisF family.

It is found in the cytoplasm. It catalyses the reaction 1-(5-phospho-beta-D-ribosyl)-5-[(5-phospho-beta-D-ribosylamino)methylideneamino]imidazole-4-carboxamide = 5-[(5-phospho-1-deoxy-D-ribulos-1-ylimino)methylamino]-1-(5-phospho-beta-D-ribosyl)imidazole-4-carboxamide. The protein operates within amino-acid biosynthesis; L-histidine biosynthesis; L-histidine from 5-phospho-alpha-D-ribose 1-diphosphate: step 4/9. The protein is 1-(5-phosphoribosyl)-5-[(5-phosphoribosylamino)methylideneamino] imidazole-4-carboxamide isomerase of Corynebacterium efficiens (strain DSM 44549 / YS-314 / AJ 12310 / JCM 11189 / NBRC 100395).